The following is a 116-amino-acid chain: Large ribosomal subunit protein bL20 (116 aa).

Belongs to the bacterial ribosomal protein bL20 family.

Its function is as follows. Binds directly to 23S ribosomal RNA and is necessary for the in vitro assembly process of the 50S ribosomal subunit. It is not involved in the protein synthesizing functions of that subunit. The polypeptide is Large ribosomal subunit protein bL20 (Phocaeicola vulgatus (strain ATCC 8482 / DSM 1447 / JCM 5826 / CCUG 4940 / NBRC 14291 / NCTC 11154) (Bacteroides vulgatus)).